The following is a 440-amino-acid chain: Putative F-box/LRR-repeat protein At5g15620 (440 aa).

The F-box domain occupies Met-1–Phe-52. LRR repeat units lie at residues Phe-4–Ser-31, Leu-126–Ser-153, Phe-156–Arg-181, Ser-194–Arg-205, Pro-210–Asp-235, Tyr-264–Val-289, and Glu-318–Gly-343.

This is Putative F-box/LRR-repeat protein At5g15620 from Arabidopsis thaliana (Mouse-ear cress).